Here is a 256-residue protein sequence, read N- to C-terminus: 5-keto-4-deoxy-D-glucarate aldolase (256 aa).

Histidine 50 functions as the Proton acceptor in the catalytic mechanism. Glutamine 151 lines the substrate pocket. A Mg(2+)-binding site is contributed by glutamate 153. Substrate-binding residues include serine 178 and aspartate 179. Aspartate 179 provides a ligand contact to Mg(2+).

It belongs to the HpcH/HpaI aldolase family. KDGluc aldolase subfamily. Homohexamer; trimer of dimers. Mg(2+) is required as a cofactor.

It carries out the reaction 5-dehydro-4-deoxy-D-glucarate = 2-hydroxy-3-oxopropanoate + pyruvate. The catalysed reaction is 2-dehydro-3-deoxy-D-glucarate = 2-hydroxy-3-oxopropanoate + pyruvate. The protein operates within carbohydrate acid metabolism; galactarate degradation; D-glycerate from galactarate: step 2/3. In terms of biological role, catalyzes the reversible retro-aldol cleavage of both 5-keto-4-deoxy-D-glucarate and 2-keto-3-deoxy-D-glucarate to pyruvate and tartronic semialdehyde. In Escherichia fergusonii (strain ATCC 35469 / DSM 13698 / CCUG 18766 / IAM 14443 / JCM 21226 / LMG 7866 / NBRC 102419 / NCTC 12128 / CDC 0568-73), this protein is 5-keto-4-deoxy-D-glucarate aldolase.